Here is a 324-residue protein sequence, read N- to C-terminus: 4-hydroxy-3-methylbut-2-enyl diphosphate reductase (324 aa).

Residue Cys-28 participates in [4Fe-4S] cluster binding. His-57 and His-90 together coordinate (2E)-4-hydroxy-3-methylbut-2-enyl diphosphate. His-57 and His-90 together coordinate dimethylallyl diphosphate. Positions 57 and 90 each coordinate isopentenyl diphosphate. Cys-112 contributes to the [4Fe-4S] cluster binding site. His-140 contacts (2E)-4-hydroxy-3-methylbut-2-enyl diphosphate. His-140 is a dimethylallyl diphosphate binding site. Residue His-140 participates in isopentenyl diphosphate binding. The active-site Proton donor is Glu-142. Thr-180 contributes to the (2E)-4-hydroxy-3-methylbut-2-enyl diphosphate binding site. Cys-210 contributes to the [4Fe-4S] cluster binding site. 4 residues coordinate (2E)-4-hydroxy-3-methylbut-2-enyl diphosphate: Ser-238, Ser-239, Asn-240, and Ser-282. Ser-238, Ser-239, Asn-240, and Ser-282 together coordinate dimethylallyl diphosphate. Isopentenyl diphosphate-binding residues include Ser-238, Ser-239, Asn-240, and Ser-282.

It belongs to the IspH family. [4Fe-4S] cluster serves as cofactor.

The catalysed reaction is isopentenyl diphosphate + 2 oxidized [2Fe-2S]-[ferredoxin] + H2O = (2E)-4-hydroxy-3-methylbut-2-enyl diphosphate + 2 reduced [2Fe-2S]-[ferredoxin] + 2 H(+). It carries out the reaction dimethylallyl diphosphate + 2 oxidized [2Fe-2S]-[ferredoxin] + H2O = (2E)-4-hydroxy-3-methylbut-2-enyl diphosphate + 2 reduced [2Fe-2S]-[ferredoxin] + 2 H(+). Its pathway is isoprenoid biosynthesis; dimethylallyl diphosphate biosynthesis; dimethylallyl diphosphate from (2E)-4-hydroxy-3-methylbutenyl diphosphate: step 1/1. The protein operates within isoprenoid biosynthesis; isopentenyl diphosphate biosynthesis via DXP pathway; isopentenyl diphosphate from 1-deoxy-D-xylulose 5-phosphate: step 6/6. Its function is as follows. Catalyzes the conversion of 1-hydroxy-2-methyl-2-(E)-butenyl 4-diphosphate (HMBPP) into a mixture of isopentenyl diphosphate (IPP) and dimethylallyl diphosphate (DMAPP). Acts in the terminal step of the DOXP/MEP pathway for isoprenoid precursor biosynthesis. This is 4-hydroxy-3-methylbut-2-enyl diphosphate reductase from Ralstonia nicotianae (strain ATCC BAA-1114 / GMI1000) (Ralstonia solanacearum).